A 328-amino-acid chain; its full sequence is tRNA uridine(34) hydroxylase (328 aa).

The Rhodanese domain maps to 123 to 217 (SDPDVLLVDT…YLEEVPQEES (95 aa)). C177 acts as the Cysteine persulfide intermediate in catalysis.

This sequence belongs to the TrhO family.

It carries out the reaction uridine(34) in tRNA + AH2 + O2 = 5-hydroxyuridine(34) in tRNA + A + H2O. Catalyzes oxygen-dependent 5-hydroxyuridine (ho5U) modification at position 34 in tRNAs. This chain is tRNA uridine(34) hydroxylase, found in Psychromonas ingrahamii (strain DSM 17664 / CCUG 51855 / 37).